The chain runs to 248 residues: ATP synthase subunit a, chloroplastic (248 aa).

Transmembrane regions (helical) follow at residues 37 to 57 (AQVLITSWVVIAILLGLSIVA), 96 to 116 (VPFIGTMFLFIFVSNWSGALF), 135 to 155 (INTTVALALLTSVAYFYAGLH), 200 to 220 (LVVAVLISLVPLVVPIPMMFL), and 221 to 241 (GLFTSAIQALIFATLAAAYIG).

It belongs to the ATPase A chain family. In terms of assembly, F-type ATPases have 2 components, CF(1) - the catalytic core - and CF(0) - the membrane proton channel. CF(1) has five subunits: alpha(3), beta(3), gamma(1), delta(1), epsilon(1). CF(0) has four main subunits: a, b, b' and c.

It localises to the plastid. It is found in the chloroplast thylakoid membrane. In terms of biological role, key component of the proton channel; it plays a direct role in the translocation of protons across the membrane. The protein is ATP synthase subunit a, chloroplastic of Angiopteris evecta (Mule's foot fern).